Here is a 211-residue protein sequence, read N- to C-terminus: uncharacterized protein (211 aa).

The tract at residues Ala-155 to Ser-211 is disordered. The span at Thr-178–Asp-188 shows a compositional bias: acidic residues. Over residues Ser-195 to Ser-211 the composition is skewed to low complexity.

This is an uncharacterized protein from Schizosaccharomyces pombe (strain 972 / ATCC 24843) (Fission yeast).